The chain runs to 312 residues: Glyceraldehyde-3-phosphate dehydrogenase, cytosolic (312 aa).

Residues 5-6 (RI) and D27 each bind NAD(+). Residues 144 to 146 (SCT), T175, 204 to 205 (TG), and R227 contribute to the D-glyceraldehyde 3-phosphate site. C145 functions as the Nucleophile in the catalytic mechanism. Residue N309 participates in NAD(+) binding.

This sequence belongs to the glyceraldehyde-3-phosphate dehydrogenase family. As to quaternary structure, homotetramer.

The protein localises to the cytoplasm. It catalyses the reaction D-glyceraldehyde 3-phosphate + phosphate + NAD(+) = (2R)-3-phospho-glyceroyl phosphate + NADH + H(+). It participates in carbohydrate degradation; glycolysis; pyruvate from D-glyceraldehyde 3-phosphate: step 1/5. In terms of biological role, key enzyme in glycolysis that catalyzes the first step of the pathway by converting D-glyceraldehyde 3-phosphate (G3P) into 3-phospho-D-glyceroyl phosphate. Essential for the maintenance of cellular ATP levels and carbohydrate metabolism. This is Glyceraldehyde-3-phosphate dehydrogenase, cytosolic (GapC) from Scenedesmus vacuolatus (Green alga).